The following is a 196-amino-acid chain: dTTP/UTP pyrophosphatase (196 aa).

Aspartate 72 functions as the Proton acceptor in the catalytic mechanism.

It belongs to the Maf family. YhdE subfamily. A divalent metal cation serves as cofactor.

Its subcellular location is the cytoplasm. It catalyses the reaction dTTP + H2O = dTMP + diphosphate + H(+). The catalysed reaction is UTP + H2O = UMP + diphosphate + H(+). In terms of biological role, nucleoside triphosphate pyrophosphatase that hydrolyzes dTTP and UTP. May have a dual role in cell division arrest and in preventing the incorporation of modified nucleotides into cellular nucleic acids. This chain is dTTP/UTP pyrophosphatase, found in Chlamydia trachomatis serovar L2 (strain ATCC VR-902B / DSM 19102 / 434/Bu).